A 383-amino-acid chain; its full sequence is Multidrug resistance protein MexA (383 aa).

The signal sequence occupies residues 1–23 (MQRTPAMRVLVPALLVAISALSG). A lipid anchor (N-palmitoyl cysteine) is attached at Cys-24. Cys-24 is lipidated: S-diacylglycerol cysteine. Positions 97–151 (ATYEADYQSAQANLASTQEQAQRYKLLVADQAVSKQQYADANAAYLQSKAAVEQA) form a coiled coil.

This sequence belongs to the membrane fusion protein (MFP) (TC 8.A.1) family. Component of the MexAB-OprM multidrug efflux complex, composed of six MexA subunits forming a hexameric tube, binding to a MexB trimer, which interact with the trimeric OprM outer membrane channel protein. OprM is thought to not directly contact MexB; instead, MexA joins MexB and OprM by forming a funnel-like hexamer anchored to the inner membrane. MexA may initially form a hexameric ring complex with MexB prior to OprM, then OprM undergoes a conformational change as it contacts MexA, allowing the periplasmic gate to open. It is thought that, under high intracellular substrate concentration, MexB ejects substrate into the tunnel formed by MexA-OprM; as the substrate level declines, conformational changes in MexB cause efflux to reduce and stop and the complex shifts to the closed state. MexB subunit acts as a substrate:proton antiporter and activity is enhanced significantly when in complex with MexA and OprM, in vitro.

It localises to the cell inner membrane. Its activity is regulated as follows. Export of antibiotics and solvents is dramatically decreased in the presence of the protonophore carbonyl cyanide m-chlorophenylhydrazone (CCCP), therefore may be driven by a proton gradient. Antibiotic efflux is inhibited by pyridopyrimidine derivatives, such as ABI-PP, acting by binding to a hydrophobic pocket in MexB. The periplasmic linker component of the MexAB-OprM efflux system that confers multidrug resistance. Functions as the major efflux pump for n-hexane and p-xylene efflux. Has been shown in one study to be involved in the active efflux of the autoinducer N-(3-oxododecanoyl) homoserine lactone, thereby playing an indirect role in quorum-sensing; but has been shown in another study not to be involved in efflux of this autoinducer. Over-expression of the pump increases antibiotic and solvent efflux capacities. Implicated in the secretion of the siderophore pyoverdine. In Pseudomonas aeruginosa (strain ATCC 15692 / DSM 22644 / CIP 104116 / JCM 14847 / LMG 12228 / 1C / PRS 101 / PAO1), this protein is Multidrug resistance protein MexA (mexA).